The sequence spans 967 residues: Mediator of RNA polymerase II transcription subunit 14 (967 aa).

This sequence belongs to the Mediator complex subunit 14 family. In terms of assembly, component of the Mediator complex.

The protein resides in the nucleus. In terms of biological role, component of the Mediator complex, a coactivator involved in the regulated transcription of nearly all RNA polymerase II-dependent genes. Mediator functions as a bridge to convey information from gene-specific regulatory proteins to the basal RNA polymerase II transcription machinery. Mediator is recruited to promoters by direct interactions with regulatory proteins and serves as a scaffold for the assembly of a functional preinitiation complex with RNA polymerase II and the general transcription factors. This chain is Mediator of RNA polymerase II transcription subunit 14 (RGR1), found in Eremothecium gossypii (strain ATCC 10895 / CBS 109.51 / FGSC 9923 / NRRL Y-1056) (Yeast).